A 370-amino-acid chain; its full sequence is Vasopressin V2 receptor (370 aa).

A compositionally biased stretch (polar residues) spans methionine 1–valine 10. Positions methionine 1–glutamate 26 are disordered. At methionine 1–glutamine 37 the chain is on the extracellular side. Residue asparagine 22 is glycosylated (N-linked (GlcNAc...) asparagine). The chain crosses the membrane as a helical span at residues alanine 38 to alanine 62. Residues arginine 63–phenylalanine 76 are Cytoplasmic-facing. A helical transmembrane segment spans residues isoleucine 77–alanine 97. Residues tryptophan 98–arginine 112 are Extracellular-facing. A helical membrane pass occupies residues alanine 113 to leucine 134. Residues aspartate 135–proline 158 are Cytoplasmic-facing. The chain crosses the membrane as a helical span at residues valine 159–glutamine 179. At arginine 180–tryptophan 199 the chain is on the extracellular side. A helical membrane pass occupies residues glycine 200 to glycine 219. The Cytoplasmic portion of the chain corresponds to isoleucine 220 to arginine 270. The helical transmembrane segment at methionine 271–tryptophan 292 threads the bilayer. Over alanine 293–valine 307 the chain is Extracellular. A helical transmembrane segment spans residues leucine 308–phenylalanine 327. Residues serine 328 to serine 370 lie on the Cytoplasmic side of the membrane. Cysteine 340 carries the S-palmitoyl cysteine lipid modification.

The protein belongs to the G-protein coupled receptor 1 family. Vasopressin/oxytocin receptor subfamily. In terms of assembly, interacts with ARRDC4. Identified in a complex containing at least ARRDC4, V2R and HGS. Interacts with TMEM147.

It localises to the cell membrane. In terms of biological role, receptor for arginine vasopressin. The activity of this receptor is mediated by G proteins which activate adenylate cyclase. Involved in renal water reabsorption. This Canis lupus familiaris (Dog) protein is Vasopressin V2 receptor (AVPR2).